The following is a 303-amino-acid chain: Elongation factor Ts (303 aa).

An involved in Mg(2+) ion dislocation from EF-Tu region spans residues 80-83; it reads TDFV.

This sequence belongs to the EF-Ts family.

Its subcellular location is the cytoplasm. Associates with the EF-Tu.GDP complex and induces the exchange of GDP to GTP. It remains bound to the aminoacyl-tRNA.EF-Tu.GTP complex up to the GTP hydrolysis stage on the ribosome. This chain is Elongation factor Ts, found in Clostridium botulinum (strain Eklund 17B / Type B).